Consider the following 137-residue polypeptide: uncharacterized protein (137 aa).

The tract at residues Met-1 to Pro-26 is disordered.

This is an uncharacterized protein from Homo sapiens (Human).